The primary structure comprises 32 residues: Cytochrome c3, 10 kDa (32 aa).

Positions 16, 25, 28, and 29 each coordinate heme.

As to quaternary structure, monomer. Post-translationally, binds 1 heme group per subunit.

Its subcellular location is the periplasm. In terms of biological role, participates in sulfate respiration coupled with phosphorylation by transferring electrons from the enzyme dehydrogenase to ferredoxin. The protein is Cytochrome c3, 10 kDa of Desulfuromonas acetoxidans (Chloropseudomonas ethylica).